Reading from the N-terminus, the 425-residue chain is Fe(2+) transport protein 3, chloroplastic (425 aa).

Residues 65-85 (FVAIASILLAGAAGVTIPLIG) form a helical membrane-spanning segment. At 86-97 (RNRRFLQTDGNL) the chain is on the cytoplasmic side. A helical transmembrane segment spans residues 98–118 (FVTAKAFAAGVILATGFVHML). The Lumenal segment spans residues 119-137 (AGGTEALKNPCLPDFPWSK). A helical membrane pass occupies residues 138–158 (FPFPGFFAMIAALITLFVDFM). The Cytoplasmic segment spans residues 159–269 (GTQYYERKQE…GLDAVNGARH (111 aa)). The helical transmembrane segment at 270–290 (IVVSQVLELGIVSHSIIIGLS) threads the bilayer. Residues 291–301 (LGVSQSPCTIR) lie on the Lumenal side of the membrane. Residues 302 to 322 (PLIAALSFHQFFEGFALGGCI) form a helical membrane-spanning segment. Residues 323-333 (SQAQFRNKSAT) lie on the Cytoplasmic side of the membrane. Residues 334–354 (IMACFFALTTPIGIGIGTAVA) form a helical membrane-spanning segment. Topologically, residues 355-369 (SSFNSHSVGALVTEG) are lumenal. A helical membrane pass occupies residues 370–390 (ILDSLSAGILVYMALVDLIAA). Residues 391–404 (DFLSTKMRCNFRLQ) are Cytoplasmic-facing. The chain crosses the membrane as a helical span at residues 405-425 (IVSYVMLFLGAGLMSSLAIWA).

Belongs to the ZIP transporter (TC 2.A.5) family.

The protein localises to the plastid. The protein resides in the chloroplast thylakoid membrane. Its function is as follows. May play a role in the transport of iron in the plastids. The protein is Fe(2+) transport protein 3, chloroplastic (IRT3) of Arabidopsis thaliana (Mouse-ear cress).